Consider the following 215-residue polypeptide: Large ribosomal subunit protein uL3 (215 aa).

Residues Gly-136–Lys-155 are disordered. At Gln-151 the chain carries N5-methylglutamine.

The protein belongs to the universal ribosomal protein uL3 family. As to quaternary structure, part of the 50S ribosomal subunit. Forms a cluster with proteins L14 and L19. Methylated by PrmB.

One of the primary rRNA binding proteins, it binds directly near the 3'-end of the 23S rRNA, where it nucleates assembly of the 50S subunit. This chain is Large ribosomal subunit protein uL3, found in Rickettsia canadensis (strain McKiel).